Consider the following 86-residue polypeptide: Small ribosomal subunit protein uS17 (86 aa).

Belongs to the universal ribosomal protein uS17 family. Part of the 30S ribosomal subunit.

Its function is as follows. One of the primary rRNA binding proteins, it binds specifically to the 5'-end of 16S ribosomal RNA. This chain is Small ribosomal subunit protein uS17, found in Halorhodospira halophila (strain DSM 244 / SL1) (Ectothiorhodospira halophila (strain DSM 244 / SL1)).